The chain runs to 203 residues: High frequency lysogenization protein HflD homolog (203 aa).

The protein belongs to the HflD family.

The protein localises to the cytoplasm. Its subcellular location is the cell inner membrane. This Vesicomyosocius okutanii subsp. Calyptogena okutanii (strain HA) protein is High frequency lysogenization protein HflD homolog.